A 269-amino-acid polypeptide reads, in one-letter code: 5'-nucleotidase SurE (269 aa).

A divalent metal cation contacts are provided by D11, D12, S43, and N101.

This sequence belongs to the SurE nucleotidase family. A divalent metal cation is required as a cofactor.

It localises to the cytoplasm. The enzyme catalyses a ribonucleoside 5'-phosphate + H2O = a ribonucleoside + phosphate. Nucleotidase that shows phosphatase activity on nucleoside 5'-monophosphates. This chain is 5'-nucleotidase SurE, found in Prochlorococcus marinus (strain MIT 9211).